The sequence spans 187 residues: Ribosome-recycling factor (187 aa).

The protein belongs to the RRF family.

The protein resides in the cytoplasm. Responsible for the release of ribosomes from messenger RNA at the termination of protein biosynthesis. May increase the efficiency of translation by recycling ribosomes from one round of translation to another. In Methylorubrum extorquens (strain CM4 / NCIMB 13688) (Methylobacterium extorquens), this protein is Ribosome-recycling factor.